The sequence spans 66 residues: Large ribosomal subunit protein bL35 (66 aa).

The protein belongs to the bacterial ribosomal protein bL35 family.

The polypeptide is Large ribosomal subunit protein bL35 (Borrelia garinii subsp. bavariensis (strain ATCC BAA-2496 / DSM 23469 / PBi) (Borreliella bavariensis)).